The sequence spans 554 residues: CTP synthase (554 aa).

Residues 1–265 are amidoligase domain; that stretch reads MTPLIFVTGG…DELVIDQFKL (265 aa). Residue Ser-13 participates in CTP binding. Ser-13 contributes to the UTP binding site. Residues 14–19 and Asp-71 contribute to the ATP site; that span reads SLGKGI. The Mg(2+) site is built by Asp-71 and Glu-139. CTP is bound by residues 146–148, 186–191, and Lys-222; these read DIE and KTKPTQ. UTP-binding positions include 186–191 and Lys-222; that span reads KTKPTQ. The 254-residue stretch at 292–545 folds into the Glutamine amidotransferase type-1 domain; the sequence is NIAVVGKYVD…VRAAREKKAG (254 aa). Gly-353 is an L-glutamine binding site. The active-site Nucleophile; for glutamine hydrolysis is Cys-380. L-glutamine contacts are provided by residues 381–384, Glu-404, and Arg-471; that span reads YGMQ. Catalysis depends on residues His-518 and Glu-520.

Belongs to the CTP synthase family. As to quaternary structure, homotetramer.

The catalysed reaction is UTP + L-glutamine + ATP + H2O = CTP + L-glutamate + ADP + phosphate + 2 H(+). It catalyses the reaction L-glutamine + H2O = L-glutamate + NH4(+). It carries out the reaction UTP + NH4(+) + ATP = CTP + ADP + phosphate + 2 H(+). Its pathway is pyrimidine metabolism; CTP biosynthesis via de novo pathway; CTP from UDP: step 2/2. Its activity is regulated as follows. Allosterically activated by GTP, when glutamine is the substrate; GTP has no effect on the reaction when ammonia is the substrate. The allosteric effector GTP functions by stabilizing the protein conformation that binds the tetrahedral intermediate(s) formed during glutamine hydrolysis. Inhibited by the product CTP, via allosteric rather than competitive inhibition. Functionally, catalyzes the ATP-dependent amination of UTP to CTP with either L-glutamine or ammonia as the source of nitrogen. Regulates intracellular CTP levels through interactions with the four ribonucleotide triphosphates. This Xanthomonas axonopodis pv. citri (strain 306) protein is CTP synthase.